The chain runs to 313 residues: Interferon-inducible double-stranded RNA-dependent protein kinase activator A (313 aa).

Over residues 1–18 (MSQSRHRAEAPPLEREDS) the composition is skewed to basic and acidic residues. The tract at residues 1 to 21 (MSQSRHRAEAPPLEREDSGTF) is disordered. Sufficient for self-association and interaction with TARBP2 stretches follow at residues 1-103 (MSQS…KANA), 102-195 (NASI…FSNI), and 195-313 (ISPE…AERK). Ser-18 is subject to Phosphoserine. 3 DRBM domains span residues 34 to 101 (TPIQ…ILKA), 126 to 194 (NPIG…KFSN), and 240 to 308 (DYIQ…YLKI). Phosphoserine is present on residues Ser-167, Ser-246, and Ser-287.

This sequence belongs to the PRKRA family. As to quaternary structure, homodimer. Interacts with EIF2AK2/PKR through its DRBM domains. Interacts with DICER1, AGO2 and TARBP2. Also able to interact with dsRNA. Interacts with UBC9. Forms a complex with UBC9 and p53/TP53. Interacts with DUS2L (via DRBM domain). Interacts with RIGI. In terms of assembly, (Microbial infection) Interacts with ebolavirus protein VP35; this interaction inhibits the interaction between RIGI and PRKRA. In addition, this interaction disrupts the interaction between VP35 and the viral polymerase L. So the VP35-PRKRA interaction plays a critical role in determining the outcome of ebolavirus infection. The interaction PRKRA-VP35 also prevents PRKRA binding to DICER1 and thus allows the virus to counteract host RNA silencing. (Microbial infection) Interacts with human herpesvirus 8 protein MTA/ORF57; this interaction inhibits stress granule formation. Post-translationally, phosphorylated at Ser-246 in unstressed cells and at Ser-287 in stressed cells. Phosphorylation at Ser-246 appears to be a prerequisite for subsequent phosphorylation at Ser-287. Phosphorylation at Ser-246 and Ser-287 are necessary for activation of EIF2AK2/PKR under conditions of stress.

It is found in the cytoplasm. The protein localises to the perinuclear region. Functionally, activates EIF2AK2/PKR in the absence of double-stranded RNA (dsRNA), leading to phosphorylation of EIF2S1/EFI2-alpha and inhibition of translation and induction of apoptosis. Required for siRNA production by DICER1 and for subsequent siRNA-mediated post-transcriptional gene silencing. Does not seem to be required for processing of pre-miRNA to miRNA by DICER1. Promotes UBC9-p53/TP53 association and sumoylation and phosphorylation of p53/TP53 at 'Lys-386' at 'Ser-392' respectively and enhances its activity in a EIF2AK2/PKR-dependent manner. This chain is Interferon-inducible double-stranded RNA-dependent protein kinase activator A (PRKRA), found in Homo sapiens (Human).